The sequence spans 613 residues: Chaperone protein dnaK (613 aa).

This sequence belongs to the heat shock protein 70 family.

The protein localises to the plastid. The protein resides in the chloroplast. Acts as a chaperone. The sequence is that of Chaperone protein dnaK from Phaeodactylum tricornutum (strain CCAP 1055/1).